Consider the following 273-residue polypeptide: Diadenylate cyclase (273 aa).

A run of 3 helical transmembrane segments spans residues 12-32 (LANIVDILVVWFVIYKVIMLI), 37-57 (AVQLLKGIFIIIAVKLLSGFF), and 61-81 (TVEWITDQMLTWGFLAIIIIF). The DAC domain occupies 82–242 (QPELRRALET…GGELFRDVSE (161 aa)).

This sequence belongs to the adenylate cyclase family. DacA/CdaA subfamily. Probably a homodimer.

It localises to the cell membrane. It carries out the reaction 2 ATP = 3',3'-c-di-AMP + 2 diphosphate. Functionally, catalyzes the condensation of 2 ATP molecules into cyclic di-AMP (c-di-AMP), a signaling compound secreted into the host's cytosol where it triggers the cytosolic surveillance pathway (CSP), a host pathway of innate immunity characterized by expression of beta interferon (IFN-beta) and coregulated genes. Overexpression increases export of c-di-AMP. c-di-AMP is a second messenger that mediates growth, cell wall stability and virulence. The sequence is that of Diadenylate cyclase from Listeria monocytogenes serotype 1/2a (strain 10403S).